Here is a 540-residue protein sequence, read N- to C-terminus: Berberine bridge enzyme-like 16 (540 aa).

An N-terminal signal peptide occupies residues 1–24; it reads MKFWSRPLTFLIIIIYLIIQQVNS. Cysteine 38 and cysteine 101 are disulfide-bonded. N-linked (GlcNAc...) asparagine glycosylation is present at asparagine 59. The region spanning 79-254 is the FAD-binding PCMH-type domain; sequence STRKPEVIVA…LAWKIKLVRV (176 aa). The 6-(S-cysteinyl)-8alpha-(pros-histidyl)-FAD (His-Cys) cross-link spans 116-178; the sequence is HDYEGFSYTS…KVHAFPAGVC (63 aa). Residues asparagine 325 and asparagine 496 are each glycosylated (N-linked (GlcNAc...) asparagine).

This sequence belongs to the oxygen-dependent FAD-linked oxidoreductase family. Requires FAD as cofactor. The FAD cofactor is bound via a bicovalent 6-S-cysteinyl, 8alpha-N1-histidyl FAD linkage.

Its subcellular location is the secreted. It is found in the cell wall. This chain is Berberine bridge enzyme-like 16, found in Arabidopsis thaliana (Mouse-ear cress).